Consider the following 317-residue polypeptide: Cytochrome f (317 aa).

Positions 1–31 are cleaved as a signal peptide; that stretch reads MIFKPQSFLKAIVLSMTITFAFNMSAPIASA. The heme site is built by Tyr32, Cys52, Cys55, and His56. Residues 280 to 302 traverse the membrane as a helical segment; sequence PVRIQGLLAFFACILLAQILLVV.

The protein belongs to the cytochrome f family. In terms of assembly, the 4 large subunits of the cytochrome b6-f complex are cytochrome b6, subunit IV (17 kDa polypeptide, petD), cytochrome f and the Rieske protein, while the 4 small subunits are PetG, PetL, PetM and PetN. The complex functions as a dimer. Heme is required as a cofactor.

The protein localises to the plastid. It is found in the chloroplast thylakoid membrane. Its function is as follows. Component of the cytochrome b6-f complex, which mediates electron transfer between photosystem II (PSII) and photosystem I (PSI), cyclic electron flow around PSI, and state transitions. The polypeptide is Cytochrome f (Chlamydomonas subcaudata).